We begin with the raw amino-acid sequence, 658 residues long: Threonine--tRNA ligase (658 aa).

The region spanning 1–61 is the TGS domain; sequence MSDVRVIIQR…KDGEEVEPVQ (61 aa). A catalytic region spans residues 259 to 554; the sequence is DHRKLGNELD…LLEHYAGAFP (296 aa). Zn(2+)-binding residues include Cys353, His404, and His531.

This sequence belongs to the class-II aminoacyl-tRNA synthetase family. In terms of assembly, homodimer. The cofactor is Zn(2+).

Its subcellular location is the cytoplasm. The catalysed reaction is tRNA(Thr) + L-threonine + ATP = L-threonyl-tRNA(Thr) + AMP + diphosphate + H(+). Functionally, catalyzes the attachment of threonine to tRNA(Thr) in a two-step reaction: L-threonine is first activated by ATP to form Thr-AMP and then transferred to the acceptor end of tRNA(Thr). Also edits incorrectly charged L-seryl-tRNA(Thr). This chain is Threonine--tRNA ligase, found in Streptomyces avermitilis (strain ATCC 31267 / DSM 46492 / JCM 5070 / NBRC 14893 / NCIMB 12804 / NRRL 8165 / MA-4680).